A 439-amino-acid polypeptide reads, in one-letter code: AP-2 complex subunit mu (439 aa).

The 267-residue stretch at 172–438 (RNELYIDVVE…LTKAGTYQNR (267 aa)) folds into the MHD domain.

This sequence belongs to the adaptor complexes medium subunit family. As to quaternary structure, adaptor protein complex 2 (AP-2) is a heterotetramer composed of two large adaptins (alpha-type and beta-type subunits), a medium adaptin (mu-type subunit AP50) and a small adaptin (sigma-type subunit AP17). Phosphorylated.

The protein localises to the cell membrane. It localises to the membrane. The protein resides in the coated pit. Its function is as follows. Component of the adaptor complexes which link clathrin to receptors in coated vesicles. Clathrin-associated protein complexes are believed to interact with the cytoplasmic tails of membrane proteins, leading to their selection and concentration. AP50 is a subunit of the plasma membrane adaptor. The protein is AP-2 complex subunit mu (apm2) of Dictyostelium discoideum (Social amoeba).